Here is a 569-residue protein sequence, read N- to C-terminus: 5'-AMP-activated protein kinase subunit gamma-2 (569 aa).

The interval 1–222 (MGSAVMDTKK…TRPPLASPTH (222 aa)) is disordered. A phosphoserine mark is found at serine 65, serine 71, serine 73, serine 90, serine 138, serine 143, serine 161, and serine 162. Over residues 156–167 (TSGLSSSPSTPT) the composition is skewed to low complexity. Threonine 165 is subject to Phosphothreonine. Positions 179–189 (SYKHEPERLEN) are enriched in basic and acidic residues. Residues 192–212 (YASSSPPDTGQRFCPSSFQSP) are compositionally biased toward polar residues. Serine 196 carries the phosphoserine modification. 3 consecutive CBS domains span residues 275-335 (PTSS…KSPM), 357-415 (TFKP…MSDM), and 430-492 (IGTY…NLDI). Residues arginine 302, 317 to 322 (MLTITD), valine 362, 383 to 384 (HR), and lysine 402 contribute to the ADP site. AMP is bound by residues arginine 302, 317-322 (MLTITD), valine 362, histidine 383, 383-384 (HR), lysine 402, threonine 432, alanine 437, 458-459 (SA), 474-477 (SKFD), arginine 501, histidine 530, 530-531 (HR), and 546-549 (SLSD). ATP is bound by residues arginine 302, 317 to 322 (MLTITD), valine 362, 383 to 384 (HR), arginine 384, and lysine 402. The short motif at 370–391 (LFDAVYSLIKNKIHRLPVIDPI) is the AMPK pseudosubstrate element. Residues 474-477 (SKFD), arginine 501, and 530-531 (HR) each bind ADP. Residues 474 to 477 (SKFD), arginine 501, and 530 to 531 (HR) each bind ATP. Residues 504-562 (YFEGVVKCNKLEILETIVDRIVRAEVHRLVVVNEADSIVGIISLSDILQALILTPAGAK) enclose the CBS 4 domain.

This sequence belongs to the 5'-AMP-activated protein kinase gamma subunit family. As to quaternary structure, AMPK is a heterotrimer of an alpha catalytic subunit (PRKAA1 or PRKAA2), a beta (PRKAB1 or PRKAB2) and a gamma non-catalytic subunits (PRKAG1, PRKAG2 or PRKAG3). Interacts with FNIP1 and FNIP2. Phosphorylated by ULK1; leading to negatively regulate AMPK activity and suggesting the existence of a regulatory feedback loop between ULK1 and AMPK. In terms of processing, glycosylated; O-GlcNAcylated by OGT, promoting the AMP-activated protein kinase (AMPK) activity. In terms of tissue distribution, isoform B is ubiquitously expressed except in liver and thymus. The highest level is detected in heart with abundant expression in placenta and testis.

Functionally, AMP/ATP-binding subunit of AMP-activated protein kinase (AMPK), an energy sensor protein kinase that plays a key role in regulating cellular energy metabolism. In response to reduction of intracellular ATP levels, AMPK activates energy-producing pathways and inhibits energy-consuming processes: inhibits protein, carbohydrate and lipid biosynthesis, as well as cell growth and proliferation. AMPK acts via direct phosphorylation of metabolic enzymes, and by longer-term effects via phosphorylation of transcription regulators. Also acts as a regulator of cellular polarity by remodeling the actin cytoskeleton; probably by indirectly activating myosin. Gamma non-catalytic subunit mediates binding to AMP, ADP and ATP, leading to activate or inhibit AMPK: AMP-binding results in allosteric activation of alpha catalytic subunit (PRKAA1 or PRKAA2) both by inducing phosphorylation and preventing dephosphorylation of catalytic subunits. ADP also stimulates phosphorylation, without stimulating already phosphorylated catalytic subunit. ATP promotes dephosphorylation of catalytic subunit, rendering the AMPK enzyme inactive. The protein is 5'-AMP-activated protein kinase subunit gamma-2 (PRKAG2) of Homo sapiens (Human).